Consider the following 336-residue polypeptide: MFYPVIKKALFQLDPERAHELTFQQLRRITNTPFEFLVRQSVPTKPVTCMGLSFKNPLGLAAGLDKDGECIDALGAMGFGFIEVGTVTPRPQSGNDKPRLFRVVEAEGLINRMGFNNKGVDSLVENVKKTRFGGVLGINIGKNKDTPVEQGKDDYLICMDKVYAHAGYIAINISSPNTPGLRSLQYGEALDDLLLAIKNKQAELKERHQKYVPVAVKIAPDLSEEELIQIADSLVRHNIDGVIATNTTLDRKLIQGLNHCGQTGGLSGRPLQTSSTEIIRRLSQELAGRLPIIGVGGIDSLVAAREKMAAGASLVQIYSGFIFHGPRLIKDIVTHI.

Residues 62 to 66 (AGLDK) and threonine 86 each bind FMN. Lysine 66 lines the substrate pocket. Substrate is bound at residue 111 to 115 (NRMGF). FMN-binding residues include asparagine 139 and asparagine 172. Residue asparagine 172 coordinates substrate. The active-site Nucleophile is the serine 175. Asparagine 177 contributes to the substrate binding site. FMN-binding residues include lysine 217 and threonine 245. 246-247 (NT) provides a ligand contact to substrate. Residues glycine 268, glycine 297, and 318 to 319 (YS) contribute to the FMN site.

It belongs to the dihydroorotate dehydrogenase family. Type 2 subfamily. As to quaternary structure, monomer. The cofactor is FMN.

It localises to the cell membrane. It carries out the reaction (S)-dihydroorotate + a quinone = orotate + a quinol. It functions in the pathway pyrimidine metabolism; UMP biosynthesis via de novo pathway; orotate from (S)-dihydroorotate (quinone route): step 1/1. Functionally, catalyzes the conversion of dihydroorotate to orotate with quinone as electron acceptor. The polypeptide is Dihydroorotate dehydrogenase (quinone) (Pectobacterium carotovorum subsp. carotovorum (strain PC1)).